The following is a 366-amino-acid chain: MSGNTLGTLFTVTTFGESHGPAIGCVIDGCPPGMALNEADIQFELDRRKPGTSRHVTQRQEEDKVEILSGVFEGQTTGAPIALLIRNTDQRSKDYGNIADTFRPGHADYTYWQKYGIRDYRGGGRSSARLTAPTVAAGAVAKKWLREKFGTEIHGYMAALGEIDVPFVDWAHVRENPFFAPNAQIVPQLETYMDALRKDGDSIGARINVVASGVPVGLGEPLFDRLDADIAHAMMGINAVKGVEIGAGFASIAQRGSVHGDELTPEGFVGNHAGGVLGGISTGQDVTVSIAIKPTSSIRTPRRSIDKAGQPVVVETFGRHDPCVGIRATPIAESMLALVLIDHALRHRAQCGDVAVSTPKIAASAP.

NADP(+) is bound by residues Arg-48 and Arg-54. Residues 125-127 (RSS), 238-239 (NA), Gly-278, 293-297 (KPTSS), and Arg-319 each bind FMN.

The protein belongs to the chorismate synthase family. In terms of assembly, homotetramer. It depends on FMNH2 as a cofactor.

It carries out the reaction 5-O-(1-carboxyvinyl)-3-phosphoshikimate = chorismate + phosphate. It participates in metabolic intermediate biosynthesis; chorismate biosynthesis; chorismate from D-erythrose 4-phosphate and phosphoenolpyruvate: step 7/7. Its function is as follows. Catalyzes the anti-1,4-elimination of the C-3 phosphate and the C-6 proR hydrogen from 5-enolpyruvylshikimate-3-phosphate (EPSP) to yield chorismate, which is the branch point compound that serves as the starting substrate for the three terminal pathways of aromatic amino acid biosynthesis. This reaction introduces a second double bond into the aromatic ring system. This chain is Chorismate synthase, found in Paraburkholderia phytofirmans (strain DSM 17436 / LMG 22146 / PsJN) (Burkholderia phytofirmans).